A 322-amino-acid polypeptide reads, in one-letter code: MAPRIPSIPSSTDLSGQSALVTGSNTGIGFENARQFLQLKASPVYLAVRSVERGQEAKKLLLDDPEVKKKNPGAVVEIYQVDMASFDSVAAFAQKFSEVKKLNIAVLNAGVSFFKYIPTSDGYETVLQVNYLSNALLATHLLPLLKAGAAASGKPSHLAFVSSNMQHMTSLKKNTIKPNENIIDWFNNRANFGMDRYNVSKLLLTGFTNELASKIDSSQVVINSMCPGLVATNFDTNSPWYLKYLMKGVRSLMARTPSEGARALTLAAITGTEGNGKYYSDGKETPSAALLLTEDGKAFQKKLWDQTLERIQQLDPTSPPPI.

Residues 47 to 48, 104 to 106, 197 to 201, and 230 to 232 each bind NAD(+); these read AV, IAV, YNVSK, and VAT. Catalysis depends on tyrosine 197, which acts as the Proton acceptor.

The protein belongs to the short-chain dehydrogenases/reductases (SDR) family.

Its pathway is secondary metabolite biosynthesis; terpenoid biosynthesis. Short chain dehydrogenase; part of the gene cluster that mediates the biosynthesis of sesquiterpenyl epoxy-cyclohexenoids (SECs) such as anthrobotrisins and arthrosporols, metabolites that possess a novel hybrid carbon skeleton consisting of a polyketide-derived epoxycyclohexenol combined with a terpenoid-derived monocyclic sesquiterpenol substructure (PKS-PTS hybrid). The SEC pathway plays an important role for fungal soil colonization via decreasing fungal nematode-capturing ability. Within the pathway, the cytochrome P450 monooxygenase AOL_s00215g274 is involved in specific regional ketone reductions at C-4 of farnesyl epoxy-quinone. The pathway begins with the biosynthesis of 6-methylsalicylic acid (6-MSA), the first precursor of the polyketide-derived epoxycyclohexenol in arthrosporols, by the polyketide synthase (PKS) AOL_s00215g283 via condensation of 1 acetate and 3 malonate units. The 6-methylsalicylic acid decarboxylase AOL_s00215g281 then catalyzes the decarboxylation of 6-methylsalicylic acid to yield m-cresol. The cytochrome P450 monooxygenase AOL_s00215g282 further oxidizes m-cresol to yield toluquinol. With the assistance of the oxidoreductase AOL_s00215g277, the polyprenyl transferase AOL_s00215g276 catalyzes the farnesylation of toluquinol to produce farnesyl hydroquinone, the hybrid precursor for biosynthesis of SECs. Farnesyl hydroquinone undergoes epoxidation and then subsequent dehydrogenation to form farnesyl epoxy-quinone, the first and simplest SEC. The cytochrome P450 monooxygenase AOL_s00215g278 and the FAD-dependent monooxygenase AOL_s00215g279 might be involved in the oxygenation of the phenol moiety, most likely in the epoxy formation. The cytochrome P450 monooxygenases AOL_s00215g274 and AOL_s00215g280 are involved in specific regional ketone reductions at respectively C-4 and C-1 of farnesyl epoxy-quinone PubMed:33823587. The chain is Short chain dehydrogenase AOL_s00215g274 from Arthrobotrys oligospora (strain ATCC 24927 / CBS 115.81 / DSM 1491) (Nematode-trapping fungus).